Reading from the N-terminus, the 4250-residue chain is Dynein axonemal heavy chain 1 (4250 aa).

Residues 1–73 (MEECNKEGPS…KSPLTGTDKK (73 aa)) are disordered. A stem region spans residues 1–1527 (MEECNKEGPS…YIRAVNAEFI (1527 aa)). Basic and acidic residues predominate over residues 24–42 (PESHDLEKILQESNYHPER). The segment covering 46–55 (NPDPKTPPLP) has biased composition (pro residues). 4 AAA regions span residues 1528–1749 (YGYE…VISA), 1809–2042 (QAIR…NTVK), 2174–2434 (TMMP…VFQG), and 2532–2784 (DYNQ…LARH). Residues 1566 to 1573 (GPAGTGKT) carry the GPAGTGKT motif motif. 1566 to 1573 (GPAGTGKT) lines the ATP pocket. A CFDEFNR motif motif is present at residues 1616 to 1622 (CFDEFNR). Residues 1847–1854 (GPTGSGKS), 2212–2219 (GPTGTGKT), and 2571–2578 (GVGGSGRS) each bind ATP. Positions 2799–3097 (FSILIGQKKM…EELEMKCEQC (299 aa)) are stalk. A coiled-coil region spans residues 3045 to 3128 (LREAQDDLEV…QETVENLENM (84 aa)). 2 AAA regions span residues 3182–3412 (LGNP…EIQA) and 3625–3844 (MQDF…QLKM).

The protein belongs to the dynein heavy chain family. In terms of assembly, consists of at least two heavy chains and a number of intermediate and light chains.

It localises to the cytoplasm. The protein resides in the cytoskeleton. It is found in the cilium axoneme. The protein localises to the cell projection. Its subcellular location is the cilium. It localises to the flagellum. In terms of biological role, force generating protein of cilia required for sperm flagellum motility. Produces force towards the minus ends of microtubules. Dynein has ATPase activity; the force-producing power stroke is thought to occur on release of ADP. Required in spermatozoa for the formation of the inner dynein arms and biogenesis of the axoneme. The sequence is that of Dynein axonemal heavy chain 1 from Mus musculus (Mouse).